A 201-amino-acid chain; its full sequence is 3-isopropylmalate dehydratase small subunit (201 aa).

It belongs to the LeuD family. LeuD type 1 subfamily. In terms of assembly, heterodimer of LeuC and LeuD.

The enzyme catalyses (2R,3S)-3-isopropylmalate = (2S)-2-isopropylmalate. It functions in the pathway amino-acid biosynthesis; L-leucine biosynthesis; L-leucine from 3-methyl-2-oxobutanoate: step 2/4. Functionally, catalyzes the isomerization between 2-isopropylmalate and 3-isopropylmalate, via the formation of 2-isopropylmaleate. The sequence is that of 3-isopropylmalate dehydratase small subunit from Sinorhizobium fredii (strain NBRC 101917 / NGR234).